The following is a 206-amino-acid chain: Glycerol-3-phosphate acyltransferase (206 aa).

Helical transmembrane passes span I4–G24, I55–L75, E78–A98, M112–L132, M137–G157, and I158–F178.

It belongs to the PlsY family. In terms of assembly, probably interacts with PlsX.

It localises to the cell membrane. The enzyme catalyses an acyl phosphate + sn-glycerol 3-phosphate = a 1-acyl-sn-glycero-3-phosphate + phosphate. It functions in the pathway lipid metabolism; phospholipid metabolism. In terms of biological role, catalyzes the transfer of an acyl group from acyl-phosphate (acyl-PO(4)) to glycerol-3-phosphate (G3P) to form lysophosphatidic acid (LPA). This enzyme utilizes acyl-phosphate as fatty acyl donor, but not acyl-CoA or acyl-ACP. This is Glycerol-3-phosphate acyltransferase from Exiguobacterium sibiricum (strain DSM 17290 / CCUG 55495 / CIP 109462 / JCM 13490 / 255-15).